Here is a 441-residue protein sequence, read N- to C-terminus: Probable indole-3-acetic acid-amido synthetase GH3.9 (441 aa).

It belongs to the IAA-amido conjugating enzyme family. In terms of tissue distribution, expressed in etiolated seedlings and roots.

In terms of biological role, may catalyze the synthesis of indole-3-acetic acid (IAA)-amino acid conjugates, providing a mechanism for the plant to cope with the presence of excess auxin. This chain is Probable indole-3-acetic acid-amido synthetase GH3.9 (GH3.9), found in Oryza sativa subsp. japonica (Rice).